The sequence spans 186 residues: Ras-related protein rapA (186 aa).

12-19 (GSGGVGKS) provides a ligand contact to GTP. The short motif at 34–42 (YDPTIEDSY) is the Effector region element. Residues 59–63 (DTAGT) and 118–121 (NKCD) contribute to the GTP site. C183 is subject to Cysteine methyl ester. A lipid anchor (S-geranylgeranyl cysteine) is attached at C183. Residues 184–186 (ALL) constitute a propeptide, removed in mature form.

It belongs to the small GTPase superfamily. Ras family. Interacts with ralGDS (only when rapA is in its GTP-bound state). Interacts with the Rap guanine nucleotide exchange factor glfB.

It localises to the cell membrane. The catalysed reaction is GTP + H2O = GDP + phosphate + H(+). G protein of the Ras family that positively regulates phagocytosis and negatively regulates macropinocytosis. May be involved in the activation of guanylyl cyclase during the response to hyperosmotic conditions. Overexpressing cells generate alterations in cell shape and contractile responses. Involved in chemotaxis via regulation of the balance of Ras and Rap signaling at the leading edge of chemotaxing cells. The chain is Ras-related protein rapA (rapA) from Dictyostelium discoideum (Social amoeba).